Reading from the N-terminus, the 200-residue chain is Endochitinase (200 aa).

Residue glutamate 58 is the Proton donor of the active site.

It belongs to the glycosyl hydrolase 19 family. Chitinase class I subfamily.

It catalyses the reaction Random endo-hydrolysis of N-acetyl-beta-D-glucosaminide (1-&gt;4)-beta-linkages in chitin and chitodextrins.. Functionally, this protein functions as a defense against chitin-containing fungal pathogens. This chain is Endochitinase, found in Avena sativa (Oat).